Here is a 96-residue protein sequence, read N- to C-terminus: UPF0251 protein Ssed_3913 (96 aa).

It belongs to the UPF0251 family.

This Shewanella sediminis (strain HAW-EB3) protein is UPF0251 protein Ssed_3913.